The chain runs to 220 residues: Aklanonic acid methyltransferase DauC (220 aa).

This sequence belongs to the methyltransferase superfamily. DnrC family. Homodimer.

It carries out the reaction aklanonate + S-adenosyl-L-methionine = methyl aklanonate + S-adenosyl-L-homocysteine. It functions in the pathway antibiotic biosynthesis; daunorubicin biosynthesis. Its pathway is antibiotic biosynthesis; carminomycin biosynthesis. The protein operates within antibiotic biosynthesis; rhodomycin biosynthesis. It participates in antibiotic biosynthesis; aclacinomycin biosynthesis. Involved in the biosynthesis of aklavinone which is an important precursor common to the formation of the clinically significant anthracyclines such as carminomycin, daunorubicin (daunomycin), rhodomycin, aclacinomycin T (aklavin) and aclacinomycin A (aclarubicin). These compounds are aromatic polyketide antibiotics that exhibit high cytotoxicity and are widely applied in the chemotherapy of a variety of cancers. Catalyzes the methyl esterification of aklanonic acid to yield aklanonic acid methyl ester. The protein is Aklanonic acid methyltransferase DauC (dauC) of Streptomyces sp. (strain C5).